The primary structure comprises 150 residues: 3-dehydroquinate dehydratase (150 aa).

Tyr26 acts as the Proton acceptor in catalysis. Asn77, His83, and Asp90 together coordinate substrate. His103 acts as the Proton donor in catalysis. Residues 104 to 105 and Arg114 each bind substrate; that span reads LS.

The protein belongs to the type-II 3-dehydroquinase family. Homododecamer.

It catalyses the reaction 3-dehydroquinate = 3-dehydroshikimate + H2O. The protein operates within metabolic intermediate biosynthesis; chorismate biosynthesis; chorismate from D-erythrose 4-phosphate and phosphoenolpyruvate: step 3/7. Its function is as follows. Catalyzes a trans-dehydration via an enolate intermediate. This is 3-dehydroquinate dehydratase from Erwinia tasmaniensis (strain DSM 17950 / CFBP 7177 / CIP 109463 / NCPPB 4357 / Et1/99).